The following is a 422-amino-acid chain: Dihydroorotase (422 aa).

Zn(2+) contacts are provided by His-59 and His-61. Residues 61–63 (HFR) and Asn-93 each bind substrate. Asp-150, His-177, and His-230 together coordinate Zn(2+). Position 276 (Asn-276) interacts with substrate. Asp-303 is a Zn(2+) binding site. Residue Asp-303 is part of the active site. Position 307 (His-307) interacts with substrate.

Belongs to the metallo-dependent hydrolases superfamily. DHOase family. Class I DHOase subfamily. It depends on Zn(2+) as a cofactor.

It carries out the reaction (S)-dihydroorotate + H2O = N-carbamoyl-L-aspartate + H(+). The protein operates within pyrimidine metabolism; UMP biosynthesis via de novo pathway; (S)-dihydroorotate from bicarbonate: step 3/3. Functionally, catalyzes the reversible cyclization of carbamoyl aspartate to dihydroorotate. This chain is Dihydroorotase, found in Streptococcus pyogenes serotype M1.